Reading from the N-terminus, the 281-residue chain is Fructose-bisphosphate aldolase class 1 (281 aa).

The active-site Schiff-base intermediate with dihydroxyacetone-P is the K191.

This sequence belongs to the DeoC/FbaB aldolase family. As to quaternary structure, homooctamer.

It localises to the cytoplasm. The catalysed reaction is beta-D-fructose 1,6-bisphosphate = D-glyceraldehyde 3-phosphate + dihydroxyacetone phosphate. Its activity is regulated as follows. Activated by citrate. The chain is Fructose-bisphosphate aldolase class 1 (fba) from Pyrococcus furiosus (strain ATCC 43587 / DSM 3638 / JCM 8422 / Vc1).